The following is a 910-amino-acid chain: Leucine--tRNA ligase (910 aa).

Positions 50–60 (PYTNGSLHVGH) match the 'HIGH' region motif. The 'KMSKS' region motif lies at 611–615 (KISKS). Lysine 614 lines the ATP pocket.

This sequence belongs to the class-I aminoacyl-tRNA synthetase family.

It is found in the cytoplasm. The enzyme catalyses tRNA(Leu) + L-leucine + ATP = L-leucyl-tRNA(Leu) + AMP + diphosphate. This is Leucine--tRNA ligase from Thermoplasma volcanium (strain ATCC 51530 / DSM 4299 / JCM 9571 / NBRC 15438 / GSS1).